Here is a 286-residue protein sequence, read N- to C-terminus: Prohibitin-2, mitochondrial (286 aa).

Residues 1 to 13 (MSFNKVPNIPGAP) lie on the Mitochondrial matrix side of the membrane. The helical; Signal-anchor for type II membrane protein transmembrane segment at 14-32 (ALSALLKVSVIGGLGVYAL) threads the bilayer. The Mitochondrial intermembrane portion of the chain corresponds to 33–286 (TNSLYNVDGG…LQEMNLEPKK (254 aa)). A coiled-coil region spans residues 186-219 (KEFTAAIEAKQVAAQEAERAKFIVEKAEQDRRSA).

It belongs to the prohibitin family. Component of a prohibitin multimeric complex in mitochondrial membranes. As to expression, mostly expressed in proliferative tissues, including vasculature, shoot and root apical tissues.

The protein resides in the mitochondrion inner membrane. Prohibitin probably acts as a holdase/unfoldase for the stabilization of newly synthesized mitochondrial proteins. The protein is Prohibitin-2, mitochondrial (PHB2) of Arabidopsis thaliana (Mouse-ear cress).